A 519-amino-acid chain; its full sequence is Cysteine--tRNA ligase (519 aa).

Position 30 (Cys-30) interacts with Zn(2+). The 'HIGH' region signature appears at 32–42 (PTVYDRAHLGN). Zn(2+) contacts are provided by Cys-221, His-253, and Glu-257. A 'KMSKS' region motif is present at residues 286-290 (KMSKS). Residue Lys-289 coordinates ATP.

The protein belongs to the class-I aminoacyl-tRNA synthetase family. As to quaternary structure, monomer. The cofactor is Zn(2+).

It localises to the cytoplasm. It carries out the reaction tRNA(Cys) + L-cysteine + ATP = L-cysteinyl-tRNA(Cys) + AMP + diphosphate. In Cereibacter sphaeroides (strain KD131 / KCTC 12085) (Rhodobacter sphaeroides), this protein is Cysteine--tRNA ligase.